Reading from the N-terminus, the 178-residue chain is Oligoribonuclease (178 aa).

Positions 7–168 constitute an Exonuclease domain; sequence LIWIDLEMTG…DDIRESIAEL (162 aa). Tyrosine 128 is a catalytic residue.

Belongs to the oligoribonuclease family.

The protein localises to the cytoplasm. 3'-to-5' exoribonuclease specific for small oligoribonucleotides. The polypeptide is Oligoribonuclease (Francisella tularensis subsp. holarctica (strain FTNF002-00 / FTA)).